The primary structure comprises 237 residues: Uridylate kinase (237 aa).

9–12 (KLSG) contributes to the ATP binding site. Gly-51 lines the UMP pocket. Positions 52 and 56 each coordinate ATP. UMP is bound by residues Asp-71 and 132-139 (CGNPFFTT). The ATP site is built by Thr-159, Tyr-165, and Asp-168.

The protein belongs to the UMP kinase family. Homohexamer.

Its subcellular location is the cytoplasm. The enzyme catalyses UMP + ATP = UDP + ADP. It functions in the pathway pyrimidine metabolism; CTP biosynthesis via de novo pathway; UDP from UMP (UMPK route): step 1/1. Inhibited by UTP. Catalyzes the reversible phosphorylation of UMP to UDP. The sequence is that of Uridylate kinase from Prochlorococcus marinus (strain MIT 9313).